Reading from the N-terminus, the 207-residue chain is Suppressor of IKBKE 1 (207 aa).

2 coiled-coil regions span residues 70 to 102 (HILLSQENTQIRDLQQENRELWISLEEHQDALE) and 162 to 193 (QFCKIQEKLAQLELENKELRELLSISSESLQA).

The protein belongs to the SIKE family. In terms of assembly, interacts with IKBKE and TBK1 via its coiled coil region. Interaction with TBK1 is disrupted upon viral infection or TLR3 stimulation. Interacts with CDC42BPB. Interacts with SIKE1 which mediates association with the STRIPAK core complex composed of PP2A catalytic and scaffolding subunits, the striatins (PP2A regulatory subunits), the striatin-associated proteins MOB4, STRIP1 and STRIP2, PDCD10 and members of the STE20 kinases, such as STK24 and STK26. Widely expressed. Expressed in brain, heart, skeletal muscle, colon, thymus, spleen, kidney, liver, small intestine, placenta, lung and leukocytes. Present in all cell lines tested (at protein level).

The protein localises to the cytoplasm. Functionally, physiological suppressor of IKK-epsilon and TBK1 that plays an inhibitory role in virus- and TLR3-triggered IRF3. Inhibits TLR3-mediated activation of interferon-stimulated response elements (ISRE) and the IFN-beta promoter. May act by disrupting the interactions of IKBKE or TBK1 with TICAM1/TRIF, IRF3 and RIGI. Does not inhibit NF-kappa-B activation pathways. Associates with the striatin-interacting phosphatase and kinase (STRIPAK) core complex, forming the extended (SIKE1:SLMAP)STRIPAK complex. The (SIKE1:SLMAP)STRIPAK complex dephosphorylates STK3 leading to the inhibition of Hippo signaling and the control of cell growth. The chain is Suppressor of IKBKE 1 from Homo sapiens (Human).